Here is a 111-residue protein sequence, read N- to C-terminus: MISDKIKLTAKDILEKEFKTGMRGYQQEEVDKFLDMIIKDYEAFHKEFEQLKQQNARLKRELEEQKLAVTQVPQQPVQTPVAQPVYNNTNTDILKRLSNLEKAVFGSKLYE.

The stretch at 38 to 72 (IKDYEAFHKEFEQLKQQNARLKRELEEQKLAVTQV) forms a coiled coil.

This sequence belongs to the GpsB family. Forms polymers through the coiled coil domains. Interacts with PBP1, MreC and EzrA.

Its subcellular location is the cytoplasm. In terms of biological role, divisome component that associates with the complex late in its assembly, after the Z-ring is formed, and is dependent on DivIC and PBP2B for its recruitment to the divisome. Together with EzrA, is a key component of the system that regulates PBP1 localization during cell cycle progression. Its main role could be the removal of PBP1 from the cell pole after pole maturation is completed. Also contributes to the recruitment of PBP1 to the division complex. Not essential for septum formation. The polypeptide is Cell cycle protein GpsB (Bacillus cereus (strain G9842)).